Consider the following 103-residue polypeptide: Signal recognition particle 19 kDa protein (103 aa).

Belongs to the SRP19 family. Part of the signal recognition particle protein translocation system, which is composed of SRP and FtsY. Archaeal SRP consists of a 7S RNA molecule of 300 nucleotides and two protein subunits: SRP54 and SRP19.

It localises to the cytoplasm. Its function is as follows. Involved in targeting and insertion of nascent membrane proteins into the cytoplasmic membrane. Binds directly to 7S RNA and mediates binding of the 54 kDa subunit of the SRP. This chain is Signal recognition particle 19 kDa protein, found in Methanopyrus kandleri (strain AV19 / DSM 6324 / JCM 9639 / NBRC 100938).